A 351-amino-acid polypeptide reads, in one-letter code: MTAIPTISVDAMGGDLGPAAVVEGIGHALKRWPDRKATYLLHGDEALLAPLLARHPKVAAVCELRHTETLVQMTDKPSEAVRRARGSSMWNAIQSVKSGEAGAIVSSGNTGALMAIGKVILRMKKGVHRPAISANWPTPKGHTVVLDVGANVQCNATQLVEFAIMGEAYHRAVFGGEAPSVGLLNVGQEELKGNDTVREADQLIRKANLDIAYQGFIEGNDISAGGIDVVVTDGFTGNIALKTAEGTARLVAGWVRDALTSSLLAKLAAGLLSLGALERLRQRMDPRYINGGVLLGLKGIVVKSHGGADGEGFASALGLAYVMAQSDFMAQIRANLDKFASFEEQEVAAAS.

The protein belongs to the PlsX family. In terms of assembly, homodimer. Probably interacts with PlsY.

Its subcellular location is the cytoplasm. The enzyme catalyses a fatty acyl-[ACP] + phosphate = an acyl phosphate + holo-[ACP]. The protein operates within lipid metabolism; phospholipid metabolism. In terms of biological role, catalyzes the reversible formation of acyl-phosphate (acyl-PO(4)) from acyl-[acyl-carrier-protein] (acyl-ACP). This enzyme utilizes acyl-ACP as fatty acyl donor, but not acyl-CoA. This is Phosphate acyltransferase from Maricaulis maris (strain MCS10) (Caulobacter maris).